The following is a 173-amino-acid chain: Inorganic pyrophosphatase (173 aa).

Positions 29, 43, and 55 each coordinate substrate. Residues Asp65, Asp70, and Asp102 each contribute to the Mg(2+) site. Tyr141 contacts substrate.

Belongs to the PPase family. Homohexamer. Requires Mg(2+) as cofactor.

It is found in the cytoplasm. It catalyses the reaction diphosphate + H2O = 2 phosphate + H(+). Catalyzes the hydrolysis of inorganic pyrophosphate (PPi) forming two phosphate ions. The polypeptide is Inorganic pyrophosphatase (Rickettsia conorii (strain ATCC VR-613 / Malish 7)).